We begin with the raw amino-acid sequence, 478 residues long: Adenosylhomocysteinase (478 aa).

The substrate site is built by threonine 67, aspartate 144, and glutamate 204. 205 to 207 contributes to the NAD(+) binding site; that stretch reads TTT. The substrate site is built by lysine 234 and aspartate 238. Residues asparagine 239, 268-273, glutamate 291, asparagine 326, 347-349, and asparagine 392 contribute to the NAD(+) site; these read GYGDVG and IGH.

It belongs to the adenosylhomocysteinase family. The cofactor is NAD(+).

The protein resides in the cytoplasm. The enzyme catalyses S-adenosyl-L-homocysteine + H2O = L-homocysteine + adenosine. Its pathway is amino-acid biosynthesis; L-homocysteine biosynthesis; L-homocysteine from S-adenosyl-L-homocysteine: step 1/1. In terms of biological role, may play a key role in the regulation of the intracellular concentration of adenosylhomocysteine. The sequence is that of Adenosylhomocysteinase from Nitrosomonas europaea (strain ATCC 19718 / CIP 103999 / KCTC 2705 / NBRC 14298).